We begin with the raw amino-acid sequence, 196 residues long: Anthranilate synthase component 2 (196 aa).

A Glutamine amidotransferase type-1 domain is found at 3 to 196; the sequence is NIVFIDNFDS…IEWALEKNNA (194 aa). L-glutamine is bound at residue 57 to 59; that stretch reads GPG. Cysteine 84 acts as the Nucleophile; for GATase activity in catalysis. Residues glutamine 88 and 134-135 each bind L-glutamine; that span reads SL. Active-site for GATase activity residues include histidine 170 and glutamate 172.

As to quaternary structure, heterotetramer consisting of two non-identical subunits: a beta subunit (TrpG) and a large alpha subunit (TrpE).

It carries out the reaction chorismate + L-glutamine = anthranilate + pyruvate + L-glutamate + H(+). The protein operates within amino-acid biosynthesis; L-tryptophan biosynthesis; L-tryptophan from chorismate: step 1/5. In terms of biological role, part of a heterotetrameric complex that catalyzes the two-step biosynthesis of anthranilate, an intermediate in the biosynthesis of L-tryptophan. In the first step, the glutamine-binding beta subunit (TrpG) of anthranilate synthase (AS) provides the glutamine amidotransferase activity which generates ammonia as a substrate that, along with chorismate, is used in the second step, catalyzed by the large alpha subunit of AS (TrpE) to produce anthranilate. In the absence of TrpG, TrpE can synthesize anthranilate directly from chorismate and high concentrations of ammonia. The sequence is that of Anthranilate synthase component 2 (trpG) from Vibrio parahaemolyticus serotype O3:K6 (strain RIMD 2210633).